The sequence spans 562 residues: Alpha-amylase 2 (562 aa).

Asn-236 lines the Ca(2+) pocket. Asp-309 serves as the catalytic Nucleophile. The active-site Proton donor is Glu-338.

This sequence belongs to the glycosyl hydrolase 13 family. As to quaternary structure, monomer. Requires Ca(2+) as cofactor.

Its subcellular location is the cytoplasm. It carries out the reaction Endohydrolysis of (1-&gt;4)-alpha-D-glucosidic linkages in polysaccharides containing three or more (1-&gt;4)-alpha-linked D-glucose units.. The protein is Alpha-amylase 2 (amyB) of Dictyoglomus thermophilum (strain ATCC 35947 / DSM 3960 / H-6-12).